Consider the following 587-residue polypeptide: 5-aminolevulinate synthase, erythroid-specific, mitochondrial (587 aa).

A mitochondrion-targeting transit peptide spans 1–49; sequence MVTAAMLLQRCPVLIRSPTGLLGKMIKTHQFLFGIGRCPILATQGPSFS. Arg-163 contacts succinyl-CoA. Positions 258 and 259 each coordinate pyridoxal 5'-phosphate. Residues Ser-280 and Lys-299 each coordinate succinyl-CoA. The pyridoxal 5'-phosphate site is built by Ser-332, His-360, and Thr-388. Lys-391 is a catalytic residue. Lys-391 bears the N6-(pyridoxal phosphate)lysine mark. Residues Thr-420 and Thr-421 each contribute to the pyridoxal 5'-phosphate site. Thr-508 contacts succinyl-CoA.

It belongs to the class-II pyridoxal-phosphate-dependent aminotransferase family. Homodimer. Interacts with SUCLA2. Pyridoxal 5'-phosphate serves as cofactor.

Its subcellular location is the mitochondrion inner membrane. The catalysed reaction is succinyl-CoA + glycine + H(+) = 5-aminolevulinate + CO2 + CoA. It functions in the pathway porphyrin-containing compound metabolism; protoporphyrin-IX biosynthesis; 5-aminolevulinate from glycine: step 1/1. Its function is as follows. Catalyzes the pyridoxal 5'-phosphate (PLP)-dependent condensation of succinyl-CoA and glycine to form aminolevulinic acid (ALA), with CoA and CO2 as by-products. Contributes significantly to heme formation during erythropoiesis. This Bos taurus (Bovine) protein is 5-aminolevulinate synthase, erythroid-specific, mitochondrial (ALAS2).